Here is a 130-residue protein sequence, read N- to C-terminus: Gonadotropin subunit beta-1 (130 aa).

Positions 1-18 (MRMRFVVMVILLPALMMS) are cleaved as a signal peptide. 5 disulfide bridges follow: cysteine 26–cysteine 74, cysteine 40–cysteine 89, cysteine 51–cysteine 105, cysteine 55–cysteine 107, and cysteine 110–cysteine 117. N-linked (GlcNAc...) asparagine glycosylation occurs at asparagine 30.

It belongs to the glycoprotein hormones subunit beta family. Heterodimer of an alpha and a beta chain.

Its subcellular location is the secreted. In terms of biological role, involved in gametogenesis and steroidogenesis. The chain is Gonadotropin subunit beta-1 (cgba) from Carassius auratus (Goldfish).